The chain runs to 507 residues: MIEQVLHYWYYVLPAFIIFHWIVSAIHTNSLRRKLGAKPFTHTQLDGFYGFKFGRDFLKAKRIGRQVDLINSRFPDDIDTFSSYTFGNHVIFTRDPENIKALLATQFNDFSLGGRIKFFKPLLGYGIFTLDGEGWKHSRAMLRPQFAREQLPMSPSLEPHFNVKAYPQEQRWVFDIQELFFRFTVDSATEFLFGESVNSLKSASIGCDEETELEERKKFAEAFNKAQEYISTRVALQQLYWFVNNSEFKECNEIVHKFTNYYVQKALDATPEELEKQSGYVFLYELVKQTRDPNVLRDHHSISLLAGRDTTAGLLSFAVFELARNPHIWAKLREDVESQFGLGEESRIEEITFESLKRCEYLKAVMNETLRLHPSVPRNARFALKDTTLPRGGGPDGKDPILVRKMSCSIFISGTQIDPKHYGKDAKLFRPERWFESSTRNLGWAYLPFNGGPRICLGQQFALTEAGYILVRLAQSFDTLELKPDTEYLTKISHLTMCLFGAFVKMD.

The helical transmembrane segment at 6-26 (LHYWYYVLPAFIIFHWIVSAI) threads the bilayer. A heme-binding site is contributed by cysteine 456.

This sequence belongs to the cytochrome P450 family. Heme serves as cofactor.

Its subcellular location is the membrane. Together with an NADPH cytochrome P450 the enzyme system catalyzes the terminal hydroxylation as the first step in the assimilation of alkanes and fatty acids. Preferentially hydroxylates lauric acid. The sequence is that of Cytochrome P450 52A7 (CYP52A7) from Candida tropicalis (Yeast).